Here is a 678-residue protein sequence, read N- to C-terminus: Serine/threonine-protein kinase mph1 (678 aa).

Disordered regions lie at residues 39–93 (KNDT…NSAL) and 114–209 (LPST…SNSV). Polar residues-rich tracts occupy residues 41–66 (DTFSSKSSHSDGTVTGDTLRRQSSGA) and 114–125 (LPSTNASHSEVS). Residues 316–607 (FIKLGVVGKG…LVHPFLNPLP (292 aa)) form the Protein kinase domain. ATP-binding positions include 322 to 330 (VGKGGSSMV) and Lys345. Asp442 (proton acceptor) is an active-site residue.

The protein belongs to the protein kinase superfamily. Ser/Thr protein kinase family.

It catalyses the reaction L-seryl-[protein] + ATP = O-phospho-L-seryl-[protein] + ADP + H(+). It carries out the reaction L-threonyl-[protein] + ATP = O-phospho-L-threonyl-[protein] + ADP + H(+). The catalysed reaction is L-tyrosyl-[protein] + ATP = O-phospho-L-tyrosyl-[protein] + ADP + H(+). Functionally, involved in mitotic spindle assembly checkpoint signaling, a process that delays anaphase until chromosomes are bioriented on the spindle, and in the repair of incorrect mitotic kinetochore-spindle microtubule attachments. Phosphorylates spc7/knl1 on MELT motifs; phosphorylation is required for recruitment of the BUB1-BUB3 complex to kinetochores. The polypeptide is Serine/threonine-protein kinase mph1 (Schizosaccharomyces pombe (strain 972 / ATCC 24843) (Fission yeast)).